A 578-amino-acid polypeptide reads, in one-letter code: Proline--tRNA ligase (578 aa).

This sequence belongs to the class-II aminoacyl-tRNA synthetase family. ProS type 1 subfamily. In terms of assembly, homodimer.

The protein resides in the cytoplasm. The enzyme catalyses tRNA(Pro) + L-proline + ATP = L-prolyl-tRNA(Pro) + AMP + diphosphate. Catalyzes the attachment of proline to tRNA(Pro) in a two-step reaction: proline is first activated by ATP to form Pro-AMP and then transferred to the acceptor end of tRNA(Pro). As ProRS can inadvertently accommodate and process non-cognate amino acids such as alanine and cysteine, to avoid such errors it has two additional distinct editing activities against alanine. One activity is designated as 'pretransfer' editing and involves the tRNA(Pro)-independent hydrolysis of activated Ala-AMP. The other activity is designated 'posttransfer' editing and involves deacylation of mischarged Ala-tRNA(Pro). The misacylated Cys-tRNA(Pro) is not edited by ProRS. This chain is Proline--tRNA ligase, found in Burkholderia lata (strain ATCC 17760 / DSM 23089 / LMG 22485 / NCIMB 9086 / R18194 / 383).